The chain runs to 101 residues: Acylphosphatase (101 aa).

The Acylphosphatase-like domain occupies 15-101; it reads RMYARVYGLV…KGEFEDFETY (87 aa). Active-site residues include Arg-30 and Asn-48.

The protein belongs to the acylphosphatase family.

It catalyses the reaction an acyl phosphate + H2O = a carboxylate + phosphate + H(+). The sequence is that of Acylphosphatase (acyP) from Saccharolobus solfataricus (strain ATCC 35092 / DSM 1617 / JCM 11322 / P2) (Sulfolobus solfataricus).